A 555-amino-acid chain; its full sequence is Aerobic glycerol-3-phosphate dehydrogenase (555 aa).

24–52 (DLFIIGGGITGAGTALDAASRGMKVALSE) contacts FAD.

This sequence belongs to the FAD-dependent glycerol-3-phosphate dehydrogenase family. FAD is required as a cofactor.

The protein localises to the cytoplasm. The enzyme catalyses a quinone + sn-glycerol 3-phosphate = dihydroxyacetone phosphate + a quinol. It participates in polyol metabolism; glycerol degradation via glycerol kinase pathway; glycerone phosphate from sn-glycerol 3-phosphate (aerobic route): step 1/1. The chain is Aerobic glycerol-3-phosphate dehydrogenase (glpD) from Bacillus subtilis (strain 168).